We begin with the raw amino-acid sequence, 230 residues long: MSRLPSLSRPCLAIACSALLGGCVAAGDVRPFAEMAPIVPVVAPVAQPTAGAIYAAGPGLNLYGDRRARDVGDLLTVNLVESTTASSTANTSISKKDATTMAAPTLLGAPLTVGGLNVLENSTSGDRSFAGKGNTAQSNRMQGSVTVTVMQRLPNGNLVIQGQKNLRLTQGDELVQVQGIVRAADIAPDNTVPSSKVADARIAYGGRGAIAQSNAMGWLSRFFNSRLSPY.

Positions 1 to 15 (MSRLPSLSRPCLAIA) are cleaved as a signal peptide. Residue C16 is the site of N-palmitoyl cysteine attachment. A lipid anchor (S-diacylglycerol cysteine) is attached at C16.

The protein belongs to the FlgH family. In terms of assembly, the basal body constitutes a major portion of the flagellar organelle and consists of four rings (L,P,S, and M) mounted on a central rod.

Its subcellular location is the cell outer membrane. The protein resides in the bacterial flagellum basal body. Its function is as follows. Assembles around the rod to form the L-ring and probably protects the motor/basal body from shearing forces during rotation. This is Flagellar L-ring protein from Xanthomonas axonopodis pv. citri (strain 306).